Reading from the N-terminus, the 441-residue chain is ATP-dependent protease ATPase subunit HslU (441 aa).

Residues I18, 60 to 65 (GVGKTE), D254, E319, and R391 contribute to the ATP site.

Belongs to the ClpX chaperone family. HslU subfamily. In terms of assembly, a double ring-shaped homohexamer of HslV is capped on each side by a ring-shaped HslU homohexamer. The assembly of the HslU/HslV complex is dependent on binding of ATP.

It localises to the cytoplasm. Its function is as follows. ATPase subunit of a proteasome-like degradation complex; this subunit has chaperone activity. The binding of ATP and its subsequent hydrolysis by HslU are essential for unfolding of protein substrates subsequently hydrolyzed by HslV. HslU recognizes the N-terminal part of its protein substrates and unfolds these before they are guided to HslV for hydrolysis. The polypeptide is ATP-dependent protease ATPase subunit HslU (Shewanella loihica (strain ATCC BAA-1088 / PV-4)).